Consider the following 243-residue polypeptide: UPF0246 protein SEQ_2141 (243 aa).

It belongs to the UPF0246 family.

The sequence is that of UPF0246 protein SEQ_2141 from Streptococcus equi subsp. equi (strain 4047).